The sequence spans 333 residues: Adenosine deaminase (333 aa).

Zn(2+) is bound by residues His12 and His14. Residues His14, Asp16, and Gly170 each contribute to the substrate site. His197 serves as a coordination point for Zn(2+). Glu200 serves as the catalytic Proton donor. Asp278 serves as a coordination point for Zn(2+). Residue Asp279 coordinates substrate.

It belongs to the metallo-dependent hydrolases superfamily. Adenosine and AMP deaminases family. Adenosine deaminase subfamily. The cofactor is Zn(2+).

It carries out the reaction adenosine + H2O + H(+) = inosine + NH4(+). The enzyme catalyses 2'-deoxyadenosine + H2O + H(+) = 2'-deoxyinosine + NH4(+). Its function is as follows. Catalyzes the hydrolytic deamination of adenosine and 2-deoxyadenosine. This is Adenosine deaminase from Shigella flexneri serotype 5b (strain 8401).